Consider the following 77-residue polypeptide: uncharacterized protein (77 aa).

A helical membrane pass occupies residues Leu-49–Met-71.

Its subcellular location is the membrane. This is an uncharacterized protein from Archaeoglobus fulgidus (strain ATCC 49558 / DSM 4304 / JCM 9628 / NBRC 100126 / VC-16).